We begin with the raw amino-acid sequence, 122 residues long: Large ribosomal subunit protein uL14 (122 aa).

This sequence belongs to the universal ribosomal protein uL14 family. Part of the 50S ribosomal subunit. Forms a cluster with proteins L3 and L19. In the 70S ribosome, L14 and L19 interact and together make contacts with the 16S rRNA in bridges B5 and B8.

Binds to 23S rRNA. Forms part of two intersubunit bridges in the 70S ribosome. This chain is Large ribosomal subunit protein uL14, found in Verminephrobacter eiseniae (strain EF01-2).